Reading from the N-terminus, the 546-residue chain is Probable protein kinase UbiB (546 aa).

The 379-residue stretch at 124–502 (DFDIQPLASA…HVRQSQSRYL (379 aa)) folds into the Protein kinase domain. ATP-binding positions include 130–138 (LASASIAQV) and lysine 153. The active-site Proton acceptor is aspartate 288. Transmembrane regions (helical) follow at residues 501-521 (YLLG…VNRP) and 522-542 (EWGL…LVGW).

The protein belongs to the ABC1 family. UbiB subfamily.

Its subcellular location is the cell inner membrane. The protein operates within cofactor biosynthesis; ubiquinone biosynthesis [regulation]. Functionally, is probably a protein kinase regulator of UbiI activity which is involved in aerobic coenzyme Q (ubiquinone) biosynthesis. The protein is Probable protein kinase UbiB of Salmonella gallinarum (strain 287/91 / NCTC 13346).